The following is a 101-amino-acid chain: Small ribosomal subunit protein uS14 (101 aa).

This sequence belongs to the universal ribosomal protein uS14 family. As to quaternary structure, part of the 30S ribosomal subunit. Contacts proteins S3 and S10.

Binds 16S rRNA, required for the assembly of 30S particles and may also be responsible for determining the conformation of the 16S rRNA at the A site. This chain is Small ribosomal subunit protein uS14, found in Shewanella amazonensis (strain ATCC BAA-1098 / SB2B).